The sequence spans 144 residues: Large ribosomal subunit protein uL15 (144 aa).

Positions 1 to 53 (MRLNSLSPAEGAKHSAKRLGRGIGSGLGKTGGRGHKGQKSRTGGGVRRGFEGG) are disordered. The segment covering 21–31 (RGIGSGLGKTG) has biased composition (gly residues).

Belongs to the universal ribosomal protein uL15 family. As to quaternary structure, part of the 50S ribosomal subunit.

Binds to the 23S rRNA. This Glaesserella parasuis serovar 5 (strain SH0165) (Haemophilus parasuis) protein is Large ribosomal subunit protein uL15.